A 343-amino-acid chain; its full sequence is tRNA N6-adenosine threonylcarbamoyltransferase (343 aa).

Fe cation contacts are provided by His-111 and His-115. Substrate is bound by residues 135–139 (VLSGG), Asp-168, Gly-181, and Asn-280. Asp-306 contributes to the Fe cation binding site.

This sequence belongs to the KAE1 / TsaD family. Fe(2+) serves as cofactor.

The protein localises to the cytoplasm. The enzyme catalyses L-threonylcarbamoyladenylate + adenosine(37) in tRNA = N(6)-L-threonylcarbamoyladenosine(37) in tRNA + AMP + H(+). Its function is as follows. Required for the formation of a threonylcarbamoyl group on adenosine at position 37 (t(6)A37) in tRNAs that read codons beginning with adenine. Is involved in the transfer of the threonylcarbamoyl moiety of threonylcarbamoyl-AMP (TC-AMP) to the N6 group of A37, together with TsaE and TsaB. TsaD likely plays a direct catalytic role in this reaction. This chain is tRNA N6-adenosine threonylcarbamoyltransferase, found in Protochlamydia amoebophila (strain UWE25).